The following is a 716-amino-acid chain: MANHAKLVDQEIYRSPVDDFELNYQEYLNDDDDDKQEAPVAVSKAPKGKGSNHGLGCRMKGLFDGFGGTDLKTIMRHLRRRRPKSGQALTNFMLSGNMEKVVDQHVKDFVHHFGRINPENGRIMGALRGNDFFNFGGLHNNLGNTGKVYLDNLMKGKCGKKRKVHKFKPIVVEELDFGAPKPAVPATPKAPVAPVAPVIPAPAVTPQKPKVDEPTYADSVSDFGLDFETEREKCLRNKTLFEDPEFPATAASLYYRTPPRDRIIWKRPGEIIANPQLITQGESRFDVKQGALGDCWFLAALANITLYDALFYRIVPPNQSFTENYAGIFHFQFWHYGKWVDVVVDDRLPTVNNQLYYLHSADNTEFWSALVEKAYAKLHGGYENLDGGTTAEALEDFTGGLTEYFDLRKSEKAAVLAALVKGMEMGSLFGCSIDADANIKEAQLRNGLVCGHAYSITAIHSITYYGEDTTLLRLRNPWGNEKEWNGAWSDGSSEWSKIDEATKKQIDVQFARDGEFWMSFEDFFSNFTQMEVCNLTAEIFDEIAEMTGVNRATETVEEEHQWHEIMEDGEWSSKKGTAGGCNNNPSTYPKNPQFSTFFTAPQSSIEADGNVTVIVAVLQKYRRELRSKGKDVLPIGVSIYSLGAEGTARSPLTAQFFSQNRPIARTTVFVNTREVTVRFRVPPGQYVIVPCTFDAYDDAEFLLRVYANGTLKSSLL.

Residues 31–53 (DDDDKQEAPVAVSKAPKGKGSNH) form a disordered region. The Calpain catalytic domain maps to 240–536 (LFEDPEFPAT…FTQMEVCNLT (297 aa)). Active-site residues include C295, H452, and N476.

This sequence belongs to the peptidase C2 family.

Calcium-regulated non-lysosomal thiol-protease which catalyzes limited proteolysis of substrates. Promotes starvation-induced muscle atrophy. The chain is Calpain clp-4 from Caenorhabditis elegans.